The following is a 275-amino-acid chain: Formamidopyrimidine-DNA glycosylase (275 aa).

The Schiff-base intermediate with DNA role is filled by proline 2. The active-site Proton donor is the glutamate 3. Lysine 60 acts as the Proton donor; for beta-elimination activity in catalysis. 2 residues coordinate DNA: histidine 93 and arginine 112. The FPG-type zinc finger occupies 240 to 274 (FVYGRKDEPCKKCGSPIEKTVVGGRGTHFCIKCQK). The active-site Proton donor; for delta-elimination activity is the arginine 264.

This sequence belongs to the FPG family. As to quaternary structure, monomer. Zn(2+) serves as cofactor.

It carries out the reaction Hydrolysis of DNA containing ring-opened 7-methylguanine residues, releasing 2,6-diamino-4-hydroxy-5-(N-methyl)formamidopyrimidine.. The catalysed reaction is 2'-deoxyribonucleotide-(2'-deoxyribose 5'-phosphate)-2'-deoxyribonucleotide-DNA = a 3'-end 2'-deoxyribonucleotide-(2,3-dehydro-2,3-deoxyribose 5'-phosphate)-DNA + a 5'-end 5'-phospho-2'-deoxyribonucleoside-DNA + H(+). Its function is as follows. Involved in base excision repair of DNA damaged by oxidation or by mutagenic agents. Acts as a DNA glycosylase that recognizes and removes damaged bases. Has a preference for oxidized purines, such as 7,8-dihydro-8-oxoguanine (8-oxoG). Has AP (apurinic/apyrimidinic) lyase activity and introduces nicks in the DNA strand. Cleaves the DNA backbone by beta-delta elimination to generate a single-strand break at the site of the removed base with both 3'- and 5'-phosphates. The chain is Formamidopyrimidine-DNA glycosylase from Bacillus licheniformis (strain ATCC 14580 / DSM 13 / JCM 2505 / CCUG 7422 / NBRC 12200 / NCIMB 9375 / NCTC 10341 / NRRL NRS-1264 / Gibson 46).